A 226-amino-acid polypeptide reads, in one-letter code: MARGKIEIKRIENSTNRQVTYSKRRNGIFKKASELTVLCDAKVSIIMLSSTGKLHEYISPSTTTKQIFDQYQNTLGVDLWSYHYERMQENLKKLKDVNKNLRKEIRQRMGEHLSDLSVEELRDLEQEMESSLKMVRDRKYQVINNQIETFKKKVRNVEQIHKNLLHEFDARDRDQHYGLVDNGGDYESVLGFSNGSSPVFALSLQPNPPNDLHSGVGSDLTFTLLE.

Residues 1 to 61 (MARGKIEIKR…GKLHEYISPS (61 aa)) form the MADS-box domain. The region spanning 84 to 174 (YERMQENLKK…LHEFDARDRD (91 aa)) is the K-box domain.

In terms of tissue distribution, expressed during flower development in stamens and petals.

Its subcellular location is the nucleus. Probable transcription factor involved in flower development. The chain is Agamous-like MADS-box protein AP3 from Vitis vinifera (Grape).